The primary structure comprises 194 residues: Putative 3-methyladenine DNA glycosylase (194 aa).

The protein belongs to the DNA glycosylase MPG family.

This Chlamydia felis (strain Fe/C-56) (Chlamydophila felis) protein is Putative 3-methyladenine DNA glycosylase.